Here is a 373-residue protein sequence, read N- to C-terminus: Leucine aminopeptidase 1 (373 aa).

An N-terminal signal peptide occupies residues 1-18; it reads MKLLSVLALSATASSVLG. A propeptide spanning residues 19–75 is cleaved from the precursor; sequence ASIPVDTRAEKFLIELAPGETRWVTEEEKWALKESGQDFFDITDEEVGFTAAVAQPA. Zn(2+)-binding residues include His-176 and Asp-195. Residue Asn-196 is glycosylated (N-linked (GlcNAc...) asparagine). Zn(2+) is bound by residues Glu-234 and Asp-261. Asn-288 is a glycosylation site (N-linked (GlcNAc...) asparagine). A disulfide bridge links Cys-310 with Cys-314. A Zn(2+)-binding site is contributed by His-343. Asn-348 is a glycosylation site (N-linked (GlcNAc...) asparagine).

Belongs to the peptidase M28 family. M28E subfamily. In terms of assembly, monomer. The cofactor is Zn(2+).

It is found in the secreted. Extracellular aminopeptidase that allows assimilation of proteinaceous substrates. The chain is Leucine aminopeptidase 1 (LAP1) from Arthroderma gypseum (strain ATCC MYA-4604 / CBS 118893) (Microsporum gypseum).